Here is a 219-residue protein sequence, read N- to C-terminus: Phosphatidylserine decarboxylase proenzyme (219 aa).

The active-site Schiff-base intermediate with substrate; via pyruvic acid is the Ser188. Pyruvic acid (Ser); by autocatalysis is present on Ser188.

The protein belongs to the phosphatidylserine decarboxylase family. PSD-A subfamily. In terms of assembly, heterodimer of a large membrane-associated beta subunit and a small pyruvoyl-containing alpha subunit. Pyruvate is required as a cofactor. Post-translationally, is synthesized initially as an inactive proenzyme. Formation of the active enzyme involves a self-maturation process in which the active site pyruvoyl group is generated from an internal serine residue via an autocatalytic post-translational modification. Two non-identical subunits are generated from the proenzyme in this reaction, and the pyruvate is formed at the N-terminus of the alpha chain, which is derived from the carboxyl end of the proenzyme. The post-translation cleavage follows an unusual pathway, termed non-hydrolytic serinolysis, in which the side chain hydroxyl group of the serine supplies its oxygen atom to form the C-terminus of the beta chain, while the remainder of the serine residue undergoes an oxidative deamination to produce ammonia and the pyruvoyl prosthetic group on the alpha chain.

It localises to the cell membrane. It carries out the reaction a 1,2-diacyl-sn-glycero-3-phospho-L-serine + H(+) = a 1,2-diacyl-sn-glycero-3-phosphoethanolamine + CO2. It participates in phospholipid metabolism; phosphatidylethanolamine biosynthesis; phosphatidylethanolamine from CDP-diacylglycerol: step 2/2. In terms of biological role, catalyzes the formation of phosphatidylethanolamine (PtdEtn) from phosphatidylserine (PtdSer). This Trichlorobacter lovleyi (strain ATCC BAA-1151 / DSM 17278 / SZ) (Geobacter lovleyi) protein is Phosphatidylserine decarboxylase proenzyme.